The following is a 688-amino-acid chain: Polyribonucleotide nucleotidyltransferase (688 aa).

Mg(2+)-binding residues include aspartate 484 and aspartate 490. Residues 550–609 (PTTEIFNVAPDKIVEIIGQGGRVIKEIVEKFEVKIDLNKPSGEVKIMGNKERVLKTKEFI) form the KH domain. Positions 626–688 (DEVLEAQVKR…NKGKIALDLA (63 aa)) constitute an S1 motif domain.

This sequence belongs to the polyribonucleotide nucleotidyltransferase family. Mg(2+) serves as cofactor.

The protein localises to the cytoplasm. The enzyme catalyses RNA(n+1) + phosphate = RNA(n) + a ribonucleoside 5'-diphosphate. In terms of biological role, involved in mRNA degradation. Catalyzes the phosphorolysis of single-stranded polyribonucleotides processively in the 3'- to 5'-direction. This chain is Polyribonucleotide nucleotidyltransferase, found in Helicobacter pylori (strain HPAG1).